Reading from the N-terminus, the 239-residue chain is Ribonuclease HII (239 aa).

The region spanning 18–231 (KIIVGLDEAG…SKNLLKEIEE (214 aa)) is the RNase H type-2 domain. Residues Asp24, Glu25, and Asp125 each coordinate a divalent metal cation.

The protein belongs to the RNase HII family. Mn(2+) is required as a cofactor. It depends on Mg(2+) as a cofactor.

It localises to the cytoplasm. It catalyses the reaction Endonucleolytic cleavage to 5'-phosphomonoester.. Its function is as follows. Endonuclease that specifically degrades the RNA of RNA-DNA hybrids. In Methanococcus maripaludis (strain C6 / ATCC BAA-1332), this protein is Ribonuclease HII.